We begin with the raw amino-acid sequence, 78 residues long: Major outer membrane lipoprotein Lpp (78 aa).

A signal peptide spans 1 to 20 (MNRTKLVLGAVILGSTLLAG). Cys21 is lipidated: N-palmitoyl cysteine. Residue Cys21 is the site of S-diacylglycerol cysteine attachment. Repeats lie at residues 24–34 (NAKIDQLSSDV) and 38–48 (NAKVDQLSNDV). Residues 27–75 (IDQLSSDVQTLNAKVDQLSNDVNAIRSDVQAAKDDAARANQRLDNQVRT) adopt a coiled-coil conformation. Lys78 is modified (N6-murein peptidoglycan lysine).

Belongs to the Lpp family. In terms of assembly, homotrimer.

It localises to the cell outer membrane. Its subcellular location is the secreted. It is found in the cell wall. A highly abundant outer membrane lipoprotein that controls the distance between the inner and outer membranes. The only protein known to be covalently linked to the peptidoglycan network (PGN). Also non-covalently binds the PGN. The link between the cell outer membrane and PGN contributes to maintenance of the structural and functional integrity of the cell envelope, and maintains the correct distance between the PGN and the outer membrane. The chain is Major outer membrane lipoprotein Lpp from Pectobacterium atrosepticum (strain SCRI 1043 / ATCC BAA-672) (Erwinia carotovora subsp. atroseptica).